Here is a 109-residue protein sequence, read N- to C-terminus: Flagellar hook-basal body complex protein FliE (109 aa).

The protein belongs to the FliE family.

It is found in the bacterial flagellum basal body. The sequence is that of Flagellar hook-basal body complex protein FliE from Nitrosomonas eutropha (strain DSM 101675 / C91 / Nm57).